The primary structure comprises 365 residues: Alanine racemase (365 aa).

The Proton acceptor; specific for D-alanine role is filled by K32. K32 carries the post-translational modification N6-(pyridoxal phosphate)lysine. R128 lines the substrate pocket. Y257 (proton acceptor; specific for L-alanine) is an active-site residue. M305 lines the substrate pocket.

It belongs to the alanine racemase family. It depends on pyridoxal 5'-phosphate as a cofactor.

The enzyme catalyses L-alanine = D-alanine. Its pathway is amino-acid biosynthesis; D-alanine biosynthesis; D-alanine from L-alanine: step 1/1. Catalyzes the interconversion of L-alanine and D-alanine. May also act on other amino acids. The polypeptide is Alanine racemase (alr) (Francisella tularensis subsp. mediasiatica (strain FSC147)).